The primary structure comprises 93 residues: Small ribosomal subunit protein uS19c (93 aa).

Positions 73–93 (EFSPTRTFRGHTKSDKKSRRP) are disordered. Residues 80–93 (FRGHTKSDKKSRRP) show a composition bias toward basic residues.

It belongs to the universal ribosomal protein uS19 family.

The protein localises to the plastid. Its subcellular location is the chloroplast. Its function is as follows. Protein S19 forms a complex with S13 that binds strongly to the 16S ribosomal RNA. This chain is Small ribosomal subunit protein uS19c (rps19), found in Mesostigma viride (Green alga).